A 138-amino-acid chain; its full sequence is Basic phospholipase A2 vaspin B chain (138 aa).

Positions 1-16 (MRILWIVAVCLIGVEG) are cleaved as a signal peptide. 7 cysteine pairs are disulfide-bonded: cysteine 42–cysteine 131, cysteine 44–cysteine 60, cysteine 59–cysteine 111, cysteine 65–cysteine 138, cysteine 66–cysteine 104, cysteine 73–cysteine 97, and cysteine 91–cysteine 102. Ca(2+) contacts are provided by tyrosine 43, glycine 45, and glycine 47. The active site involves histidine 63. Aspartate 64 contributes to the Ca(2+) binding site. The active site involves aspartate 105.

Belongs to the phospholipase A2 family. Group II subfamily. D49 sub-subfamily. In terms of assembly, heterodimer of a weakly toxic basic protein having phospholipase A2 activity (B chain (AC Q8JFG1)) and a non-toxic acidic protein functioning as its inhibitor (A chain). It depends on Ca(2+) as a cofactor. Expressed by the venom gland.

It localises to the secreted. The catalysed reaction is a 1,2-diacyl-sn-glycero-3-phosphocholine + H2O = a 1-acyl-sn-glycero-3-phosphocholine + a fatty acid + H(+). Its function is as follows. Heterodimer: postsynaptic neurotoxin. Monomer: snake venom phospholipase A2 (PLA2) that shows postsynaptic neurotoxicity. PLA2 catalyzes the calcium-dependent hydrolysis of the 2-acyl groups in 3-sn-phosphoglycerides. The polypeptide is Basic phospholipase A2 vaspin B chain (Vipera aspis aspis (Aspic viper)).